A 93-amino-acid polypeptide reads, in one-letter code: HIG1 domain family member 1A, mitochondrial (93 aa).

Residues 1–93 (MSTDTGVSLP…YREFWAKPKP (93 aa)) enclose the HIG1 domain. An N-acetylserine modification is found at Ser2. Ser8 carries the phosphoserine modification. 2 helical membrane-spanning segments follow: residues 26-46 (EAPF…YGLY) and 60-80 (LIHM…VGMG).

Associates with cytochrome c oxidase (COX, complex IV); proposed complex component. Also associates with respiratory chain supercomplexes.

The protein resides in the mitochondrion membrane. The protein localises to the mitochondrion inner membrane. Its function is as follows. Proposed subunit of cytochrome c oxidase (COX, complex IV), which is the terminal component of the mitochondrial respiratory chain that catalyzes the reduction of oxygen to water. May play a role in the assembly of respiratory supercomplexes. This chain is HIG1 domain family member 1A, mitochondrial (HIGD1A), found in Homo sapiens (Human).